The following is a 512-amino-acid chain: Cobyric acid synthase (512 aa).

The GATase cobBQ-type domain maps to 251 to 451 (ALDITVIRLP…IHGLFDSANF (201 aa)). Catalysis depends on cysteine 332, which acts as the Nucleophile. Residue histidine 443 is part of the active site.

It belongs to the CobB/CobQ family. CobQ subfamily.

It participates in cofactor biosynthesis; adenosylcobalamin biosynthesis. In terms of biological role, catalyzes amidations at positions B, D, E, and G on adenosylcobyrinic A,C-diamide. NH(2) groups are provided by glutamine, and one molecule of ATP is hydrogenolyzed for each amidation. This chain is Cobyric acid synthase, found in Photorhabdus laumondii subsp. laumondii (strain DSM 15139 / CIP 105565 / TT01) (Photorhabdus luminescens subsp. laumondii).